Reading from the N-terminus, the 786-residue chain is LPS-assembly protein LptD (786 aa).

Positions 1–39 (MPPKPLFPNVFPGDGAPRKRRLALALLAVPGLVPAVSYA) are cleaved as a signal peptide.

The protein belongs to the LptD family. In terms of assembly, component of the lipopolysaccharide transport and assembly complex. Interacts with LptE and LptA.

It localises to the cell outer membrane. Functionally, together with LptE, is involved in the assembly of lipopolysaccharide (LPS) at the surface of the outer membrane. The chain is LPS-assembly protein LptD from Burkholderia ambifaria (strain ATCC BAA-244 / DSM 16087 / CCUG 44356 / LMG 19182 / AMMD) (Burkholderia cepacia (strain AMMD)).